A 125-amino-acid polypeptide reads, in one-letter code: Subtelomeric hrmA-associated cluster protein cgnA (125 aa).

G-Q-I/R/S repeat units follow at residues Gly-11–Ile-13, Gly-14–Ile-16, Gly-17–Arg-19, Gly-20–Ser-22, Gly-23–Arg-25, Gly-26–Ser-28, Gly-29–Arg-31, Gly-32–Ser-34, Gly-35–Ile-37, Gly-38–Ser-40, Gly-41–Ser-43, Gly-44–Ser-46, Gly-47–Ser-49, Gly-50–Ser-52, Gly-53–Ile-55, Gly-56–Ile-58, Gly-59–Ile-61, Gly-62–Ile-64, Gly-65–Ile-67, Gly-68–Ile-70, Gly-71–Ile-73, Gly-74–Ile-76, and Gly-77–Ala-79. A 23 X 3 AA approximate tandem repeats of G-Q-I/R/S region spans residues Gly-11–Ala-79. Residues Pro-15–Gln-57 form a disordered region.

Its subcellular location is the secreted. Functionally, hypoxia responsive morphology factor that modulates the expression of the subtelomeric hrmA-associated cluster (HAC) containing genes that alter the hyphal surface (such as reduced total chitin or increased beta-glucan exposure) and perturb inter-hyphal interactions within the developing biofilms, resulting in a loss of vertically aligned polarized growing filaments. Consequently, this hypoxia-typic morphotype (called H-MORPH) with altered biofilm architecture leads to increased hypoxia fitness, increased host inflammation, rapid disease progression, and mortality in a murine model of invasive aspergillosis. GcnA is directly involved in the reduction total surface chitin and the increase beta-glucan exposure, and mediates the detachment of the extracellular matrix and especially of its component galactosaminogalactan (GAG). In Aspergillus fumigatus (strain CBS 144.89 / FGSC A1163 / CEA10) (Neosartorya fumigata), this protein is Subtelomeric hrmA-associated cluster protein cgnA.